Consider the following 152-residue polypeptide: Sulfur-rich protein (152 aa).

A compositionally biased stretch (polar residues) spans 1–11; the sequence is MSTTPIVSGVT. Positions 1–21 are disordered; sequence MSTTPIVSGVTSQNNSSENVS. Residues 12-21 are compositionally biased toward low complexity; it reads SQNNSSENVS. Helical transmembrane passes span 44–64 and 73–93; these read VGLAVVGIFLVILSIVLLFIL and IYLAIPAILGCVNICIGILSM.

Its subcellular location is the membrane. The polypeptide is Sulfur-rich protein (srp) (Chlamydia muridarum (strain MoPn / Nigg)).